The following is a 323-amino-acid chain: Aquaporin NIP3-1 (323 aa).

Met1 carries the post-translational modification N-acetylmethionine. 2 helical membrane-spanning segments follow: residues 45–65 (LIGE…AIVV) and 73–93 (VTLP…IYSI). Residues 102 to 104 (NPA) carry the NPA 1 motif. 3 helical membrane-spanning segments follow: residues 122 to 142 (GYIA…RLVF), 167 to 187 (TSFV…SAVA), and 196 to 216 (FAGI…GPIS). The NPA 2 motif lies at 221–223 (NPA). Residues 239 to 259 (WLYIVSPVIGALSGAWTYGLL) traverse the membrane as a helical segment.

This sequence belongs to the MIP/aquaporin (TC 1.A.8) family. NIP (TC 1.A.8.12) subfamily.

It localises to the membrane. Its function is as follows. Aquaporins facilitate the transport of water and small neutral solutes across cell membranes. This Arabidopsis thaliana (Mouse-ear cress) protein is Aquaporin NIP3-1 (NIP3-1).